The chain runs to 526 residues: Glucose-6-phosphate 1-dehydrogenase (526 aa).

Residues 50-57 (GASGDLAK), Arg-84, and Lys-184 each bind NADP(+). D-glucose 6-phosphate-binding positions include Lys-184, 214-218 (HYLGK), Glu-252, and Asp-271. The active-site Proton acceptor is the His-276. Residue Arg-370 coordinates NADP(+). Residues Lys-373 and Arg-378 each coordinate D-glucose 6-phosphate. Residues Lys-379, Arg-383, and Arg-406 each coordinate NADP(+). Gln-408 provides a ligand contact to D-glucose 6-phosphate. NADP(+) is bound by residues 414 to 416 (YFK), 434 to 436 (DLT), Arg-500, Tyr-516, and Trp-522.

The protein belongs to the glucose-6-phosphate dehydrogenase family.

It localises to the cytoplasm. The protein localises to the cytosol. It catalyses the reaction D-glucose 6-phosphate + NADP(+) = 6-phospho-D-glucono-1,5-lactone + NADPH + H(+). Its pathway is carbohydrate degradation; pentose phosphate pathway; D-ribulose 5-phosphate from D-glucose 6-phosphate (oxidative stage): step 1/3. In terms of biological role, cytosolic glucose-6-phosphate dehydrogenase that catalyzes the first and rate-limiting step of the oxidative branch within the pentose phosphate pathway/shunt, an alternative route to glycolysis for the dissimilation of carbohydrates and a major source of reducing power and metabolic intermediates for fatty acid and nucleic acid biosynthetic processes. The polypeptide is Glucose-6-phosphate 1-dehydrogenase (ZW) (Ceratitis capitata (Mediterranean fruit fly)).